Here is a 589-residue protein sequence, read N- to C-terminus: Probable translation initiation factor IF-2 (589 aa).

Residues 5-219 form the tr-type G domain; sequence IRTPIVCVLG…IMIGLAQRYL (215 aa). Residues 14–21 are G1; that stretch reads GHVDHGKT. 14 to 21 contributes to the GTP binding site; that stretch reads GHVDHGKT. The interval 39–43 is G2; it reads AITQH. Residues 75 to 78 form a G3 region; sequence DTPG. GTP is bound by residues 75-79 and 129-132; these read DTPGH and TKLD. A G4 region spans residues 129–132; it reads TKLD. The segment at 197–199 is G5; it reads SSM.

Belongs to the TRAFAC class translation factor GTPase superfamily. Classic translation factor GTPase family. IF-2 subfamily.

In terms of biological role, function in general translation initiation by promoting the binding of the formylmethionine-tRNA to ribosomes. Seems to function along with eIF-2. This is Probable translation initiation factor IF-2 from Methanocorpusculum labreanum (strain ATCC 43576 / DSM 4855 / Z).